We begin with the raw amino-acid sequence, 171 residues long: 6,7-dimethyl-8-ribityllumazine synthase (171 aa).

5-amino-6-(D-ribitylamino)uracil contacts are provided by residues Phe-24, 58–60 (ALE), and 82–84 (AVI). Residue 87–88 (ET) coordinates (2S)-2-hydroxy-3-oxobutyl phosphate. His-90 acts as the Proton donor in catalysis. Asn-115 is a binding site for 5-amino-6-(D-ribitylamino)uracil. Arg-129 is a binding site for (2S)-2-hydroxy-3-oxobutyl phosphate. A disordered region spans residues 150 to 171 (ALDQLGDDEDEEEDEDDEEERA). The span at 154–171 (LGDDEDEEEDEDDEEERA) shows a compositional bias: acidic residues.

Belongs to the DMRL synthase family.

The enzyme catalyses (2S)-2-hydroxy-3-oxobutyl phosphate + 5-amino-6-(D-ribitylamino)uracil = 6,7-dimethyl-8-(1-D-ribityl)lumazine + phosphate + 2 H2O + H(+). Its pathway is cofactor biosynthesis; riboflavin biosynthesis; riboflavin from 2-hydroxy-3-oxobutyl phosphate and 5-amino-6-(D-ribitylamino)uracil: step 1/2. In terms of biological role, catalyzes the formation of 6,7-dimethyl-8-ribityllumazine by condensation of 5-amino-6-(D-ribitylamino)uracil with 3,4-dihydroxy-2-butanone 4-phosphate. This is the penultimate step in the biosynthesis of riboflavin. This is 6,7-dimethyl-8-ribityllumazine synthase from Burkholderia cenocepacia (strain HI2424).